The chain runs to 772 residues: MRSLIYRQLLYNSYSVDLSDEITNIGAEKKENVTVQIGEFAQSQYAPVSWGSGETLSGNVEEQPLDGPYTPDKSNLPSNYWYLINPSNDGVVFSVTDNSTLWMFTYLVLPNTAQTSVVVNVMNETVNISIDNSGSAYKFVDYFKTSSAQAYRSRNFLITAHRLQAYKRDGDGNISNYWGSDAYGDLRVGTYFNPVPNAVINLNADFYVIPDSQQEMCTEYIRRGLPAIQTTTYVTPISYAVRSQRIARPNEDITISKASLWKEVQYNRDIVIRFVFANNIIKAGGLGYKWSEISYKANNYQYTYMRDGIEVVAHTTVSVNGVSVYDYNTGSLPTDFTIRNYDVLKESSFVYVDYWDDSQAFRNMVYVRSLNAELNQVQCVGGHYSFALPVGSWPVMQGGSVVLTFDGVTLSTQFTDYVSLNSLRFRFRCAVSEPPFRVTGTRISNLYGLPAANPMGDQQYYEASGRFSLISLVPSNDDYQTPIANSVTVRQDLERQLDEMRREFNELSANIALSQLIDLALLPLDMFSMFSGIRSTIEAAKNFATSVMKKFRKSNLAKSVNSLTDAITDAAGSISRSSTLRSANSAVSVWTDISDIVDSTDNVVTATATAAAKKFRVKEFTTEFNGVSFDDISAAVVKTKMNKLNVVDEEMLPQIITEASEKFIPNRAYRLIDGDKVYEVTTEGKYFAYLTETFEEVMFDAERFAELVTYSPVISAIIDFKTIKNLNDNYGITREQALNMLRSDPKVLRSFINQNNPIIKNRIEQLILQCRI.

A spike head region spans residues 65 to 225 (LDGPYTPDKS…MCTEYIRRGL (161 aa)). A spike body and stalk (antigen domain) region spans residues 247-478 (ARPNEDITIS…LISLVPSNDD (232 aa)). The tract at residues 388–408 (LPVGSWPVMQGGSVVLTFDGV) is hydrophobic; possible role in virus entry into host cell. Residues 447 to 449 (YGL) carry the YGL motif; interaction with ITGA4 motif. Positions 483–510 (IANSVTVRQDLERQLDEMRREFNELSAN) form a coiled coil. The interval 509-772 (ANIALSQLID…IEQLILQCRI (264 aa)) is spike foot.

It belongs to the rotavirus VP4 family. Homotrimer. VP4 adopts a dimeric appearance above the capsid surface, while forming a trimeric base anchored inside the capsid layer. Only hints of the third molecule are observed above the capsid surface. It probably performs a series of molecular rearrangements during viral entry. Prior to trypsin cleavage, it is flexible. The priming trypsin cleavage triggers its rearrangement into rigid spikes with approximate two-fold symmetry of their protruding parts. After an unknown second triggering event, cleaved VP4 may undergo another rearrangement, in which two VP5* subunits fold back on themselves and join a third subunit to form a tightly associated trimer, shaped like a folded umbrella. Interacts with VP6. Interacts with VP7. In terms of assembly, homotrimer. The trimer is coiled-coil stabilized by its C-terminus, however, its N-terminus, known as antigen domain or 'body', seems to be flexible allowing it to self-associate either as a dimer or a trimer. In terms of processing, proteolytic cleavage by trypsin results in activation of VP4 functions and greatly increases infectivity. The penetration into the host cell is dependent on trypsin treatment of VP4. It produces two peptides, VP5* and VP8* that remain associated with the virion. Cleavage of VP4 by trypsin probably occurs in vivo in the lumen of the intestine prior to infection of enterocytes. Trypsin seems to be incorporated into the three-layered viral particles but remains inactive as long as the viral outer capsid is intact and would only be activated upon the solubilization of the latter.

The protein localises to the virion. The protein resides in the host rough endoplasmic reticulum. Its subcellular location is the host cell membrane. It is found in the host cytoplasm. It localises to the host cytoskeleton. The protein localises to the host endoplasmic reticulum-Golgi intermediate compartment. Functionally, spike-forming protein that mediates virion attachment to the host epithelial cell receptors and plays a major role in cell penetration, determination of host range restriction and virulence. Rotavirus attachment and entry into the host cell probably involves multiple sequential contacts between the outer capsid proteins VP4 and VP7, and the cell receptors. It is subsequently lost, together with VP7, following virus entry into the host cell. Following entry into the host cell, low intracellular or intravesicular Ca(2+) concentration probably causes the calcium-stabilized VP7 trimers to dissociate from the virion. This step is probably necessary for the membrane-disrupting entry step and the release of VP4, which is locked onto the virion by VP7. During the virus exit from the host cell, VP4 seems to be required to target the newly formed virions to the host cell lipid rafts. Its function is as follows. Forms the spike 'foot' and 'body' and acts as a membrane permeabilization protein that mediates release of viral particles from endosomal compartments into the cytoplasm. During entry, the part of VP5* that protrudes from the virus folds back on itself and reorganizes from a local dimer to a trimer. This reorganization may be linked to membrane penetration by exposing VP5* hydrophobic region. In integrin-dependent strains, VP5* targets the integrin heterodimer ITGA2/ITGB1 for cell attachment. Forms the head of the spikes and mediates the recognition of specific host cell surface glycans. It is the viral hemagglutinin and an important target of neutralizing antibodies. In sialic acid-dependent strains, VP8* binds to host cell sialic acid, most probably a ganglioside, providing the initial contact. In some other strains, VP8* mediates the attachment to histo-blood group antigens (HBGAs) for viral entry. This Homo sapiens (Human) protein is Outer capsid protein VP4.